Consider the following 403-residue polypeptide: Phosphopentomutase (403 aa).

Residues D13, D298, H303, D339, H340, and H351 each coordinate Mn(2+).

This sequence belongs to the phosphopentomutase family. Mn(2+) serves as cofactor.

Its subcellular location is the cytoplasm. The enzyme catalyses 2-deoxy-alpha-D-ribose 1-phosphate = 2-deoxy-D-ribose 5-phosphate. The catalysed reaction is alpha-D-ribose 1-phosphate = D-ribose 5-phosphate. It participates in carbohydrate degradation; 2-deoxy-D-ribose 1-phosphate degradation; D-glyceraldehyde 3-phosphate and acetaldehyde from 2-deoxy-alpha-D-ribose 1-phosphate: step 1/2. Its function is as follows. Isomerase that catalyzes the conversion of deoxy-ribose 1-phosphate (dRib-1-P) and ribose 1-phosphate (Rib-1-P) to deoxy-ribose 5-phosphate (dRib-5-P) and ribose 5-phosphate (Rib-5-P), respectively. The chain is Phosphopentomutase from Streptococcus pyogenes serotype M4 (strain MGAS10750).